The following is a 353-amino-acid chain: GTPase Obg (353 aa).

One can recognise an Obg domain in the interval 1–159; that stretch reads MKFLDEAKVY…RWIWLRLKLI (159 aa). In terms of domain architecture, OBG-type G spans 160-327; it reads ADAGLVGLPN…ALRALAAVIG (168 aa). Residues 166-173, 191-195, 212-215, 279-282, and 308-310 contribute to the GTP site; these read GLPNAGKS, FTTLH, DIPG, NKID, and SGI. Residues Ser-173 and Thr-193 each coordinate Mg(2+). The segment at 332–353 is disordered; the sequence is SDKAKGAADNAANAEPWAPQDA.

It belongs to the TRAFAC class OBG-HflX-like GTPase superfamily. OBG GTPase family. As to quaternary structure, monomer. It depends on Mg(2+) as a cofactor.

Its subcellular location is the cytoplasm. Functionally, an essential GTPase which binds GTP, GDP and possibly (p)ppGpp with moderate affinity, with high nucleotide exchange rates and a fairly low GTP hydrolysis rate. Plays a role in control of the cell cycle, stress response, ribosome biogenesis and in those bacteria that undergo differentiation, in morphogenesis control. The polypeptide is GTPase Obg (Rhodopseudomonas palustris (strain HaA2)).